The following is a 358-amino-acid chain: Phenylalanine--tRNA ligase alpha subunit (358 aa).

Glu258 serves as a coordination point for Mg(2+).

Belongs to the class-II aminoacyl-tRNA synthetase family. Phe-tRNA synthetase alpha subunit type 1 subfamily. Tetramer of two alpha and two beta subunits. Mg(2+) serves as cofactor.

It localises to the cytoplasm. It carries out the reaction tRNA(Phe) + L-phenylalanine + ATP = L-phenylalanyl-tRNA(Phe) + AMP + diphosphate + H(+). The polypeptide is Phenylalanine--tRNA ligase alpha subunit (Rhodospirillum rubrum (strain ATCC 11170 / ATH 1.1.1 / DSM 467 / LMG 4362 / NCIMB 8255 / S1)).